Reading from the N-terminus, the 118-residue chain is Disulfide bond formation protein (118 aa).

The signal sequence occupies residues 1–27; the sequence is MRAKWLWMTAVGSLLITVLTAWGWAAA. Residues 28–114 form the Thioredoxin domain; it reads SSQDSKIVYV…VAEAVLRSFF (87 aa). A disulfide bond links Cys42 and Cys45.

This sequence belongs to the thioredoxin family.

It localises to the secreted. In terms of biological role, stimulates the oxidation and reduction of disulfide bonds in vitro. The sequence is that of Disulfide bond formation protein (bdb) from Brevibacillus choshinensis.